Consider the following 121-residue polypeptide: Ribosome-binding factor A (121 aa).

This sequence belongs to the RbfA family. In terms of assembly, monomer. Binds 30S ribosomal subunits, but not 50S ribosomal subunits or 70S ribosomes.

Its subcellular location is the cytoplasm. Its function is as follows. One of several proteins that assist in the late maturation steps of the functional core of the 30S ribosomal subunit. Associates with free 30S ribosomal subunits (but not with 30S subunits that are part of 70S ribosomes or polysomes). Required for efficient processing of 16S rRNA. May interact with the 5'-terminal helix region of 16S rRNA. This Paraburkholderia xenovorans (strain LB400) protein is Ribosome-binding factor A.